We begin with the raw amino-acid sequence, 299 residues long: ATP phosphoribosyltransferase (299 aa).

The protein belongs to the ATP phosphoribosyltransferase family. Long subfamily. Mg(2+) serves as cofactor.

The protein resides in the cytoplasm. It carries out the reaction 1-(5-phospho-beta-D-ribosyl)-ATP + diphosphate = 5-phospho-alpha-D-ribose 1-diphosphate + ATP. The protein operates within amino-acid biosynthesis; L-histidine biosynthesis; L-histidine from 5-phospho-alpha-D-ribose 1-diphosphate: step 1/9. With respect to regulation, feedback inhibited by histidine. Catalyzes the condensation of ATP and 5-phosphoribose 1-diphosphate to form N'-(5'-phosphoribosyl)-ATP (PR-ATP). Has a crucial role in the pathway because the rate of histidine biosynthesis seems to be controlled primarily by regulation of HisG enzymatic activity. The polypeptide is ATP phosphoribosyltransferase (Actinobacillus pleuropneumoniae serotype 7 (strain AP76)).